The sequence spans 209 residues: Ribosome maturation factor RimM (209 aa).

The 76-residue stretch at 103 to 178 (EGATYVSDLV…RIEMVLPQGM (76 aa)) folds into the PRC barrel domain. The tract at residues 184-209 (PLSKAEKERQKSEADETREAGERRKR) is disordered. The segment covering 187-209 (KAEKERQKSEADETREAGERRKR) has biased composition (basic and acidic residues).

It belongs to the RimM family. As to quaternary structure, binds ribosomal protein uS19.

It is found in the cytoplasm. An accessory protein needed during the final step in the assembly of 30S ribosomal subunit, possibly for assembly of the head region. Essential for efficient processing of 16S rRNA. May be needed both before and after RbfA during the maturation of 16S rRNA. It has affinity for free ribosomal 30S subunits but not for 70S ribosomes. This Koribacter versatilis (strain Ellin345) protein is Ribosome maturation factor RimM.